The sequence spans 487 residues: Homeobox protein homothorax (487 aa).

3 disordered regions span residues Tyr-25–His-49, Asp-210–Asn-292, and Asn-333–Arg-369. Residues Gly-127–Thr-211 enclose the MEIS N-terminal domain. Composition is skewed to polar residues over residues Asn-227–Ala-237 and Asn-333–Ala-345. A DNA-binding region (homeobox; TALE-type) is located at residues Asn-365–Met-427.

This sequence belongs to the TALE/MEIS homeobox family. Interacts with exd; required for nuclear translocation of exd. In the wing disk, the expression is present in the regions corresponding to notum, wing hinge and ventral pleura. In the leg disk, the expression is in the periphery region, corresponding to the proximal segments of the legs. In the antennal disk, the expression is in all but the arista region. In the eye disk, the expression is strong in the anterior region surrounding the eye field, including the regions corresponding to ptilinum, ocellus and head capsules, and weak in the posterior and lateral margins of the eye disk. Expressed specifically in maturating inner photoreceptors of the DRA and maintained through adulthood.

Its subcellular location is the nucleus. Functionally, all isoforms are required for patterning of the embryonic cuticle. Acts with exd to delimit the eye field and prevent inappropriate eye development. Isoforms that carry the homeodomain are required for proper localization of chordotonal organs within the peripheral nervous system and antennal identity; required to activate antennal-specific genes, such as sal and to repress the leg-like expression of dac. Necessary for the nuclear localization of the essential HOX cofactor, extradenticle (exd). Both necessary and sufficient for inner photoreceptors to adopt the polarization-sensitive 'dorsal rim area' (DRA) of the eye fate instead of the color-sensitive default state. This occurs by increasing rhabdomere size and uncoupling R7-R8 communication to allow both cells to express the same opsin rather than different ones as required for color vision. The protein is Homeobox protein homothorax of Drosophila melanogaster (Fruit fly).